The sequence spans 912 residues: Protein translocase subunit SecA (912 aa).

ATP contacts are provided by residues Q87, 105–109 (GEGKT), and D508. Positions 865–912 (DEEAAQVQSGNAPLPVSQVTRDEPKVGRNDPCPCGSGKKYKHCHGQLS) are disordered. Zn(2+)-binding residues include C896, C898, C907, and H908. Basic residues predominate over residues 902–912 (KKYKHCHGQLS).

It belongs to the SecA family. Monomer and homodimer. Part of the essential Sec protein translocation apparatus which comprises SecA, SecYEG and auxiliary proteins SecDF-YajC and YidC. The cofactor is Zn(2+).

The protein resides in the cell inner membrane. The protein localises to the cytoplasm. It carries out the reaction ATP + H2O + cellular proteinSide 1 = ADP + phosphate + cellular proteinSide 2.. Part of the Sec protein translocase complex. Interacts with the SecYEG preprotein conducting channel. Has a central role in coupling the hydrolysis of ATP to the transfer of proteins into and across the cell membrane, serving both as a receptor for the preprotein-SecB complex and as an ATP-driven molecular motor driving the stepwise translocation of polypeptide chains across the membrane. In Xanthomonas oryzae pv. oryzae (strain PXO99A), this protein is Protein translocase subunit SecA.